Here is a 382-residue protein sequence, read N- to C-terminus: Type II secretion system protein L (382 aa).

The Cytoplasmic portion of the chain corresponds to 1-233 (MSGVSALFLP…QQSSQWRRWR (233 aa)). The chain crosses the membrane as a helical span at residues 234-254 (PLLGLVGLWLVLQWGFTLVQA). At 255 to 382 (WQLQREGDRY…TVSARLVIGG (128 aa)) the chain is on the periplasmic side.

The protein belongs to the GSP L family. As to quaternary structure, type II secretion system is composed of four main components: the outer membrane complex, the inner membrane complex, the cytoplasmic secretion ATPase and the periplasm-spanning pseudopilus. Forms homodimers. Interacts with XcpZ/GspM. Interacts with XcpR/GspE and XcpS/GspF.

The protein localises to the cell inner membrane. Functionally, inner membrane component of the type II secretion system required for the energy-dependent secretion of extracellular factors such as proteases and toxins from the periplasm. Plays a role in the complex assembly and recruits XcpZ resulting in a stable complex in the inner membrane. Provides thus a link between the energy-providing XcpR protein in the cytoplasm and the rest of the T2SS machinery. This Pseudomonas aeruginosa (strain ATCC 15692 / DSM 22644 / CIP 104116 / JCM 14847 / LMG 12228 / 1C / PRS 101 / PAO1) protein is Type II secretion system protein L (xcpY).